The chain runs to 199 residues: Interferon kappa (199 aa).

The signal sequence occupies residues 1–21 (MTPKFLWLVALVALYIPPIQS). Intrachain disulfides connect cysteine 24–cysteine 119 and cysteine 49–cysteine 162.

This sequence belongs to the alpha/beta interferon family. Expressed at low levels in peritoneal macrophages.

It is found in the secreted. In terms of biological role, may play a role in the regulation of immune cell function. This is Interferon kappa (Ifnk) from Mus musculus (Mouse).